Here is a 247-residue protein sequence, read N- to C-terminus: Eukaryotic translation initiation factor 3 subunit J (247 aa).

Disordered stretches follow at residues 1–64 and 77–101; these read MADW…KTLK and EEKRKAEEKQKLEEEDKELTPEEQM. Over residues 24–45 the composition is skewed to acidic residues; the sequence is EGEDEDDDIKESWDDDDEDEKK. A coiled-coil region spans residues 43-108; the sequence is EKKEDEAKNT…EQMAEKLRRQ (66 aa).

The protein belongs to the eIF-3 subunit J family. Component of the eukaryotic translation initiation factor 3 (eIF-3) complex.

Its subcellular location is the cytoplasm. Component of the eukaryotic translation initiation factor 3 (eIF-3) complex, which is involved in protein synthesis of a specialized repertoire of mRNAs and, together with other initiation factors, stimulates binding of mRNA and methionyl-tRNAi to the 40S ribosome. The eIF-3 complex specifically targets and initiates translation of a subset of mRNAs involved in cell proliferation. This chain is Eukaryotic translation initiation factor 3 subunit J, found in Nematostella vectensis (Starlet sea anemone).